A 678-amino-acid polypeptide reads, in one-letter code: Elongation factor G 2 (678 aa).

Residues 4–278 (QKLRNIGIIA…AVVDYLPSPQ (275 aa)) form the tr-type G domain. GTP contacts are provided by residues 13–20 (AHVDAGKT), 77–81 (DTPGH), and 131–134 (NKMD).

This sequence belongs to the TRAFAC class translation factor GTPase superfamily. Classic translation factor GTPase family. EF-G/EF-2 subfamily.

The protein localises to the cytoplasm. Functionally, catalyzes the GTP-dependent ribosomal translocation step during translation elongation. During this step, the ribosome changes from the pre-translocational (PRE) to the post-translocational (POST) state as the newly formed A-site-bound peptidyl-tRNA and P-site-bound deacylated tRNA move to the P and E sites, respectively. Catalyzes the coordinated movement of the two tRNA molecules, the mRNA and conformational changes in the ribosome. The chain is Elongation factor G 2 from Hahella chejuensis (strain KCTC 2396).